Here is a 123-residue protein sequence, read N- to C-terminus: Ribosome-binding factor A (123 aa).

The protein belongs to the RbfA family. In terms of assembly, monomer. Binds 30S ribosomal subunits, but not 50S ribosomal subunits or 70S ribosomes.

Its subcellular location is the cytoplasm. Its function is as follows. One of several proteins that assist in the late maturation steps of the functional core of the 30S ribosomal subunit. Associates with free 30S ribosomal subunits (but not with 30S subunits that are part of 70S ribosomes or polysomes). Required for efficient processing of 16S rRNA. May interact with the 5'-terminal helix region of 16S rRNA. The sequence is that of Ribosome-binding factor A from Solibacter usitatus (strain Ellin6076).